Here is a 1045-residue protein sequence, read N- to C-terminus: Desmoglein-1 (1045 aa).

A signal peptide spans 1–23; sequence MNWPFFRTAAVLFIFLVVLEVNS. A propeptide spanning residues 24 to 49 is cleaved from the precursor; sequence EFRIQVRDYNTKNGTIKWHSIRRQKR. N-linked (GlcNAc...) asparagine glycans are attached at residues N36, N110, and N180. Cadherin domains are found at residues 50–158, 159–270, 271–385, and 386–496; these read EWIK…PVFS, MSTF…PYME, LPSN…GSVF, and RPGS…TDGA. Over 50 to 546 the chain is Extracellular; that stretch reads EWIKFAAACR…HPLDNVHFGP (497 aa). Residues 547–567 form a helical membrane-spanning segment; the sequence is AGIGLLIMGFLVLGLVPFLLM. Residues 568–1045 are Cytoplasmic-facing; it reads YCDCGGAPGG…TKYSTVQYTK (478 aa). Desmoglein repeat repeat units follow at residues 814–840, 841–870, 871–900, 901–928, and 929–957; these read TYPSGPGVHHPMPIPDPLSYGNVTMTE, SYTTSGILKPSVHVHDNRQASNVVVTERVV, GPISGANLHGMLEMPDLRDGSNVIVTERVI, APNSSLPTTLTIPDPRESSNVVVTERVI, and RPTSGIVGNLSMHPDISNTHNVIVTERVV. The tract at residues 1019–1045 is disordered; that stretch reads FSNTLGSASPTTTRSRITKYSTVQYTK. Over residues 1020-1045 the composition is skewed to polar residues; sequence SNTLGSASPTTTRSRITKYSTVQYTK.

Binds to JUP/plakoglobin. Interacts with PKP2. Interacts with DSC3; there is evidence to suggest that the interaction promotes cell-cell adhesion of keratinocytes.

Its subcellular location is the cell membrane. It localises to the cell junction. The protein localises to the desmosome. It is found in the cytoplasm. The protein resides in the nucleus. In terms of biological role, component of intercellular desmosome junctions. Involved in the interaction of plaque proteins and intermediate filaments mediating cell-cell adhesion. This is Desmoglein-1 (DSG1) from Sus scrofa (Pig).